The primary structure comprises 237 residues: 1-(5-phosphoribosyl)-5-[(5-phosphoribosylamino)methylideneamino] imidazole-4-carboxamide isomerase (237 aa).

The active-site Proton acceptor is the Asp8. The Proton donor role is filled by Asp129.

It belongs to the HisA/HisF family.

Its subcellular location is the cytoplasm. It carries out the reaction 1-(5-phospho-beta-D-ribosyl)-5-[(5-phospho-beta-D-ribosylamino)methylideneamino]imidazole-4-carboxamide = 5-[(5-phospho-1-deoxy-D-ribulos-1-ylimino)methylamino]-1-(5-phospho-beta-D-ribosyl)imidazole-4-carboxamide. It functions in the pathway amino-acid biosynthesis; L-histidine biosynthesis; L-histidine from 5-phospho-alpha-D-ribose 1-diphosphate: step 4/9. This is 1-(5-phosphoribosyl)-5-[(5-phosphoribosylamino)methylideneamino] imidazole-4-carboxamide isomerase from Roseiflexus castenholzii (strain DSM 13941 / HLO8).